Consider the following 1137-residue polypeptide: Voltage-dependent calcium channel subunit alpha-2/delta-4 (1137 aa).

A signal peptide spans 1-19; that stretch reads MVCGCSALLPLPNPRPTMP. At 20–1115 the chain is on the extracellular side; that stretch reads ATPNFLANPS…AQDCGGASDT (1096 aa). Asn201 carries N-linked (GlcNAc...) asparagine glycosylation. The region spanning 291–473 is the VWFA domain; the sequence is DIVILVDVSG…ENVMEYLHVL (183 aa). A divalent metal cation is bound by residues Asp297, Ser299, and Ser301. The MIDAS-like motif signature appears at 297-301; it reads DVSGS. A disulfide bridge connects residues Cys447 and Cys1097. The Cache domain maps to 487–580; that stretch reads WTEAYMDSKL…RPLYREGKKL (94 aa). N-linked (GlcNAc...) asparagine glycosylation occurs at Asn664. A helical transmembrane segment spans residues 1116–1136; that stretch reads SASPPLLLLPVCAWGLLPQLL. Residue Arg1137 is a topological domain, cytoplasmic.

Belongs to the calcium channel subunit alpha-2/delta family. Dimer formed of alpha-2-2 and delta-2 chains; disulfide-linked. Voltage-dependent calcium channels are multisubunit complexes, consisting of alpha-1 (CACNA1), alpha-2 (CACNA2D), beta (CACNB) and delta (CACNA2D) subunits in a 1:1:1:1 ratio. Interacts with CACNA1C and CACNB3. Post-translationally, may be proteolytically processed into subunits alpha-2-4 and delta-4 that are disulfide-linked. It is however unclear whether such cleavage really takes place in vivo and has a functional role. Predominantly expressed in certain types of endocrine cells. Present in the Paneth cells of the small intestine. Also present in the erythroblasts in the fetal liver, in the cells of the zona reticularis of the adrenal gland and in the basophils of the pituitary. Present at low level in some brain regions such as the cerebellum (at protein level).

The protein resides in the membrane. In terms of biological role, the alpha-2/delta subunit of voltage-dependent calcium channels regulates calcium current density and activation/inactivation kinetics of the calcium channel. The sequence is that of Voltage-dependent calcium channel subunit alpha-2/delta-4 (CACNA2D4) from Homo sapiens (Human).